Consider the following 264-residue polypeptide: Glutamate racemase (264 aa).

Substrate is bound by residues 10 to 11 (DS) and 42 to 43 (YG). The Proton donor/acceptor role is filled by Cys73. 74 to 75 (NT) contributes to the substrate binding site. Cys181 functions as the Proton donor/acceptor in the catalytic mechanism. Position 182 to 183 (182 to 183 (TH)) interacts with substrate.

This sequence belongs to the aspartate/glutamate racemases family.

The enzyme catalyses L-glutamate = D-glutamate. It functions in the pathway cell wall biogenesis; peptidoglycan biosynthesis. Provides the (R)-glutamate required for cell wall biosynthesis. This Thermoanaerobacter sp. (strain X514) protein is Glutamate racemase.